A 544-amino-acid polypeptide reads, in one-letter code: Lysophosphatidylcholine acyltransferase 2 (544 aa).

Over 1-58 the chain is Cytoplasmic; that stretch reads MNRCAEAAAVAATVPGSGVGDAGLRPPMVPRQASFFPPPVPNPFVQQTTISASRRLQM. Residues 59–79 form a helical; Signal-anchor for type II membrane protein membrane-spanning segment; the sequence is FLLGIILLPVRALLVGIILLL. At 80-544 the chain is on the lumenal side; that stretch reads AWPFAVISTA…EEGTSDKKVD (465 aa). The short motif at 146–151 is the HXXXXD motif element; that stretch reads HSTFFD. The EGTC motif signature appears at 220–223; that stretch reads EGTC. EF-hand domains lie at 391–426 and 428–463; these read PVSD…LCNP and NTEE…SLGV. Positions 404, 406, 408, 410, 415, 441, 443, 445, 447, and 452 each coordinate Ca(2+). Over residues 520 to 532 the composition is skewed to polar residues; sequence TAPSVASNKVSPE. The tract at residues 520 to 544 is disordered; sequence TAPSVASNKVSPESQEEGTSDKKVD.

Belongs to the 1-acyl-sn-glycerol-3-phosphate acyltransferase family. Highest expression is found in resident macrophages and casein-induced neutrophils followed by skin, colon, spleen and thioglycollate-induced macrophages. Detected in erythroleukemic cells but not in reticulocytes.

The protein resides in the endoplasmic reticulum membrane. Its subcellular location is the golgi apparatus membrane. The protein localises to the cell membrane. It localises to the lipid droplet. It carries out the reaction a 1-acyl-sn-glycero-3-phosphocholine + an acyl-CoA = a 1,2-diacyl-sn-glycero-3-phosphocholine + CoA. The enzyme catalyses a 1-O-alkyl-sn-glycero-3-phosphocholine + acetyl-CoA = a 1-O-alkyl-2-acetyl-sn-glycero-3-phosphocholine + CoA. It catalyses the reaction a 1-acyl-sn-glycero-3-phosphate + an acyl-CoA = a 1,2-diacyl-sn-glycero-3-phosphate + CoA. The catalysed reaction is a 1-O-(1Z-alkenyl)-sn-glycero-3-phosphocholine + an acyl-CoA = a 1-O-(1Z-alkenyl)-2-acyl-sn-glycero-3-phosphocholine + CoA. It carries out the reaction 1-O-octadecyl-sn-glycero-3-phosphocholine + acetyl-CoA = 1-O-octadecyl-2-acetyl-sn-glycero-3-phosphocholine + CoA. The enzyme catalyses 1-hexadecanoyl-sn-glycero-3-phosphocholine + acetyl-CoA = 1-hexadecanoyl-2-acetyl-sn-glycero-3-phosphocholine + CoA. It catalyses the reaction 1-octadecanoyl-sn-glycero-3-phosphocholine + acetyl-CoA = 1-octadecanoyl-2-acetyl-sn-glycero-3-phosphocholine + CoA. The catalysed reaction is a 1-O-(1Z-alkenyl)-sn-glycero-3-phosphocholine + acetyl-CoA = 1-O-(1Z)-alkenyl-2-acetyl-sn-glycero-3-phosphocholine + CoA. It carries out the reaction 1-O-hexadecyl-sn-glycero-3-phosphocholine + acetyl-CoA = 1-O-hexadecyl-2-acetyl-sn-glycero-3-phosphocholine + CoA. The enzyme catalyses 1-O-octadecyl-sn-glycero-3-phosphocholine + (5Z,8Z,11Z,14Z)-eicosatetraenoyl-CoA = 1-O-octadecyl-2-(5Z,8Z,11Z,14Z)-eicosatetraenoyl-sn-glycero-3-phosphocholine + CoA. It catalyses the reaction 1-hexadecanoyl-sn-glycero-3-phosphate + (9Z)-octadecenoyl-CoA = 1-hexadecanoyl-2-(9Z-octadecenoyl)-sn-glycero-3-phosphate + CoA. The catalysed reaction is 1-(9Z-octadecenoyl)-sn-glycero-3-phosphate + (9Z)-octadecenoyl-CoA = 1,2-di-(9Z-octadecenoyl)-sn-glycero-3-phosphate + CoA. It carries out the reaction 1-(9Z-octadecenoyl)-sn-glycero-3-phosphate + hexadecanoyl-CoA = 1-(9Z)-octadecenoyl-2-hexadecanoyl-sn-glycero-3-phosphate + CoA. The enzyme catalyses 1-heptadecanoyl-sn-glycero-3-phosphate + (9Z)-octadecenoyl-CoA = 1-heptadecanoyl-2-(9Z)-octadecenoyl-sn-glycero-3-phosphate + CoA. It catalyses the reaction 1-octadecanoyl-sn-glycero-3-phosphate + (9Z)-octadecenoyl-CoA = 1-octadecanoyl-2-(9Z-octadecenoyl)-sn-glycero-3-phosphate + CoA. The catalysed reaction is heptadecanoyl-CoA + 1-(9Z-octadecenoyl)-sn-glycero-3-phosphate = 1-(9Z)-octadecenoyl-2-heptadecanoyl-sn-glycero-3-phosphate + CoA. It carries out the reaction 1-(9Z-octadecenoyl)-sn-glycero-3-phosphate + (9Z,12Z)-octadecadienoyl-CoA = 1-(9Z)-octadecenoyl-2-(9Z,12Z)-octadecadienoyl-sn-glycero-3-phosphate + CoA. The enzyme catalyses 1-(9Z-octadecenoyl)-sn-glycero-3-phosphate + tetradecanoyl-CoA = 1-(9Z)-octadecenoyl-2-tetradecanoyl-sn-glycero-3-phosphate + CoA. It catalyses the reaction pentadecanoyl-CoA + 1-(9Z-octadecenoyl)-sn-glycero-3-phosphate = 1-(9Z)-octadecenoyl-2-pentadecanoyl-sn-glycero-3-phosphate + CoA. The catalysed reaction is nonadecanoyl-CoA + 1-(9Z-octadecenoyl)-sn-glycero-3-phosphate = 1-(9Z)-octadecenoyl-2-nonadecanoyl-sn-glycero-3-phosphate + CoA. It carries out the reaction 1-hexadecanoyl-sn-glycero-3-phosphocholine + (9Z)-octadecenoyl-CoA = 1-hexadecanoyl-2-(9Z-octadecenoyl)-sn-glycero-3-phosphocholine + CoA. It participates in lipid metabolism; phospholipid metabolism. Its activity is regulated as follows. Acetyltransferase activity is increased following acute inflammatory stimulation by lipopolysaccharide (LPS). Acyltransferase activity is unchanged. Its function is as follows. Exhibits both acyltransferase and acetyltransferase activities. Activity is calcium-dependent. Catalyzes the conversion of lysophosphatidylcholine (1-acyl-sn-glycero-3-phosphocholine or LPC) into phosphatidylcholine (1,2-diacyl-sn-glycero-3-phosphocholine or PC). Catalyzes the conversion 1-acyl-sn-glycerol-3-phosphate (lysophosphatidic acid or LPA) into 1,2-diacyl-sn-glycerol-3-phosphate (phosphatidic acid or PA) by incorporating an acyl moiety at the sn-2 position of the glycerol backbone. Involved in platelet-activating factor (PAF) biosynthesis by catalyzing the conversion of the PAF precursor, 1-O-alkyl-sn-glycero-3-phosphocholine (lyso-PAF) into 1-O-alkyl-2-acetyl-sn-glycero-3-phosphocholine (PAF). Also converts lyso-PAF to 1-O-alkyl-2-acyl-sn-glycero-3-phosphocholine (PC), a major component of cell membranes and a PAF precursor. Under resting conditions, acyltransferase activity is preferred. Upon acute inflammatory stimulus, acetyltransferase activity is enhanced and PAF synthesis increases. Involved in the regulation of lipid droplet number and size. In Mus musculus (Mouse), this protein is Lysophosphatidylcholine acyltransferase 2 (Lpcat2).